Here is a 108-residue protein sequence, read N- to C-terminus: Large ribosomal subunit protein uL22 (108 aa).

The protein belongs to the universal ribosomal protein uL22 family. As to quaternary structure, part of the 50S ribosomal subunit.

Functionally, this protein binds specifically to 23S rRNA; its binding is stimulated by other ribosomal proteins, e.g. L4, L17, and L20. It is important during the early stages of 50S assembly. It makes multiple contacts with different domains of the 23S rRNA in the assembled 50S subunit and ribosome. The globular domain of the protein is located near the polypeptide exit tunnel on the outside of the subunit, while an extended beta-hairpin is found that lines the wall of the exit tunnel in the center of the 70S ribosome. The sequence is that of Large ribosomal subunit protein uL22 from Nitratiruptor sp. (strain SB155-2).